The following is a 134-amino-acid chain: Interleukin-5 (134 aa).

The signal sequence occupies residues Met1–Ala21. Asn76 and Asn90 each carry an N-linked (GlcNAc...) asparagine glycan.

This sequence belongs to the IL-5 family. In terms of assembly, homodimer; disulfide-linked. Interacts with IL5RA. Interacts with CSF2RB.

It localises to the secreted. Homodimeric cytokine expressed predominantly by T-lymphocytes and NK cells that plays an important role in the survival, differentiation, and chemotaxis of eosinophils. Also acts on activated and resting B-cells to induce immunoglobulin production, growth, and differentiation. Mechanistically, exerts its biological effects through a receptor composed of IL5RA subunit and the cytokine receptor common subunit beta/CSF2RB. Binding to the receptor leads to activation of various kinases including LYN, SYK and JAK2 and thereby propagates signals through the RAS-MAPK and JAK-STAT5 pathways respectively. This chain is Interleukin-5 (IL5), found in Bos taurus (Bovine).